Reading from the N-terminus, the 311-residue chain is Tyrosine recombinase XerD (311 aa).

The 86-residue stretch at 3–88 (DMSAAYVEAF…ALRQFYKFLY (86 aa)) folds into the Core-binding (CB) domain. Positions 109–298 (TLPKTLSIED…LEERLHDLVQ (190 aa)) constitute a Tyr recombinase domain. Residues arginine 156, lysine 180, histidine 250, arginine 253, and histidine 276 contribute to the active site. Tyrosine 285 (O-(3'-phospho-DNA)-tyrosine intermediate) is an active-site residue.

The protein belongs to the 'phage' integrase family. XerD subfamily. As to quaternary structure, forms a cyclic heterotetrameric complex composed of two molecules of XerC and two molecules of XerD.

It localises to the cytoplasm. Its function is as follows. Site-specific tyrosine recombinase, which acts by catalyzing the cutting and rejoining of the recombining DNA molecules. The XerC-XerD complex is essential to convert dimers of the bacterial chromosome into monomers to permit their segregation at cell division. It also contributes to the segregational stability of plasmids. This chain is Tyrosine recombinase XerD, found in Rhizobium meliloti (strain 1021) (Ensifer meliloti).